Consider the following 592-residue polypeptide: Transmembrane 9 superfamily member 2 (592 aa).

Positions 1 to 24 are cleaved as a signal peptide; the sequence is MRTPTTILLLVGAILFSGAGYVRS. The Lumenal segment spans residues 25–229; that stretch reads DASDHRYKEG…SLPHHLEIHW (205 aa). Residues 230-250 form a helical membrane-spanning segment; sequence FSIINSCVTVLLLTGFLATIL. Residues 251 to 302 lie on the Cytoplasmic side of the membrane; the sequence is MRVLKNDFMKYAQDEEAADDQEETGWKYIHGDVFRFPTHNSLFAASLGSGTQ. Residues 303 to 323 traverse the membrane as a helical segment; that stretch reads LFTLTIFIFMLALVGVFYPYN. Arg324 is a topological domain (lumenal). The helical transmembrane segment at 325–345 threads the bilayer; the sequence is GALFTALVVIYALTSGIAGYT. Topologically, residues 346 to 362 are cytoplasmic; it reads SASFYCQLEGKSWVRNL. A helical transmembrane segment spans residues 363-383; the sequence is LLTGCLFCGPLFLTFCFLNTV. Residues 384–397 lie on the Lumenal side of the membrane; the sequence is AITYTATAALPFGT. A helical membrane pass occupies residues 398–418; that stretch reads IVVIVLIWTLVTSPLLVLGGI. The Cytoplasmic segment spans residues 419 to 452; it reads AGKNSKAEFQAPCRTTKYPREIPPLPWYRSAIPQ. A helical transmembrane segment spans residues 453-473; that stretch reads MAMAGFLPFSAIYIELYYIFA. Residues 474–485 are Lumenal-facing; it reads SVWGHRIYTIYS. Residues 486–506 traverse the membrane as a helical segment; the sequence is ILFIVFIILIIVTAFITVALT. Over 507-521 the chain is Cytoplasmic; sequence YFQLAAEDHQWWWRS. A helical transmembrane segment spans residues 522–542; that stretch reads FLCGGSTGLFIYAYCLYYYYA. Over 543 to 553 the chain is Lumenal; that stretch reads RSDMSGFMQTS. Residues 554–574 traverse the membrane as a helical segment; that stretch reads FFFGYMACICYGFFLMLGTVG. Topologically, residues 575 to 592 are cytoplasmic; sequence FRAALLFVRHIYRSIKCE. The Endoplasmic reticulum export signal motif lies at 581-586; the sequence is FVRHIY. The short motif at 590–592 is the Golgi retention signal element; the sequence is KCE.

It belongs to the nonaspanin (TM9SF) (TC 9.A.2) family.

It localises to the endosome membrane. The protein localises to the golgi apparatus membrane. This is Transmembrane 9 superfamily member 2 from Arabidopsis thaliana (Mouse-ear cress).